Consider the following 274-residue polypeptide: Acetyl-coenzyme A carboxylase carboxyl transferase subunit alpha (274 aa).

The CoA carboxyltransferase C-terminal domain maps to 2 to 250 (NKEFIKSIVV…KKEIMNAMNE (249 aa)).

The protein belongs to the AccA family. Acetyl-CoA carboxylase is a heterohexamer composed of biotin carboxyl carrier protein (AccB), biotin carboxylase (AccC) and two subunits each of ACCase subunit alpha (AccA) and ACCase subunit beta (AccD).

The protein localises to the cytoplasm. It carries out the reaction N(6)-carboxybiotinyl-L-lysyl-[protein] + acetyl-CoA = N(6)-biotinyl-L-lysyl-[protein] + malonyl-CoA. It functions in the pathway lipid metabolism; malonyl-CoA biosynthesis; malonyl-CoA from acetyl-CoA: step 1/1. Component of the acetyl coenzyme A carboxylase (ACC) complex. First, biotin carboxylase catalyzes the carboxylation of biotin on its carrier protein (BCCP) and then the CO(2) group is transferred by the carboxyltransferase to acetyl-CoA to form malonyl-CoA. This Clostridium botulinum (strain Alaska E43 / Type E3) protein is Acetyl-coenzyme A carboxylase carboxyl transferase subunit alpha.